A 117-amino-acid chain; its full sequence is Type II secretion system protein I (117 aa).

Positions 1–6 (MKSKRG) are cleaved as a propeptide — leader sequence. Position 7 is an N-methylphenylalanine (phenylalanine 7). The chain crosses the membrane as a helical span at residues 7–27 (FTLLEVLVALAIFATAAISVI).

Belongs to the GSP I family. Type II secretion is composed of four main components: the outer membrane complex, the inner membrane complex, the cytoplasmic secretion ATPase and the periplasm-spanning pseudopilus. Interacts with core component EpsG. Cleaved by prepilin peptidase. In terms of processing, methylated by prepilin peptidase at the amino group of the N-terminal phenylalanine once the leader sequence is cleaved by prepilin peptidase.

It localises to the cell inner membrane. In terms of biological role, component of the type II secretion system required for the energy-dependent secretion of extracellular factors such as proteases and toxins from the periplasm. Part of the pseudopilus tip complex that is critical for the recognition and binding of secretion substrates. The polypeptide is Type II secretion system protein I (epsI) (Vibrio cholerae serotype O1 (strain ATCC 39315 / El Tor Inaba N16961)).